We begin with the raw amino-acid sequence, 718 residues long: Sec-independent protein translocase protein TatCt (718 aa).

A run of 8 helical transmembrane segments spans residues 34–54, 84–104, 137–157, 178–198, 214–231, 234–254, 280–300, and 325–345; these read VFIVFLVGFLGTFYALRLYVW, ILLQAKIGLVVGVLFALPPFI, LFAAGVAYGYFVFFPFTFAFL, FIFLLTLSFGLASQLPLAMTG, WRHAIVGIFAFGALFTPP, FTQIMWAVPVILLYAFSLYLA, LAGVGVVVGLLVYAFYEYGGV, and LGAFVVAGGFVGLAFGLAYLV. A disordered region spans residues 421–451; it reads REAEAADAEDEPGELEDRTTRAGGAFVSELT. The span at 425-434 shows a compositional bias: acidic residues; it reads AADAEDEPGE. Transmembrane regions (helical) follow at residues 478–498, 539–559, 572–592, 621–641, 661–681, and 682–702; these read AFWVVGWFMLVLATTFGWLYT, FSTILAVLATLPLVAYFVWPA, TVFVWTGALAGGLLGGFALGY, FFWLIFFTTAGIGLLADVPIL, EVTVFILAISAVFTPASITTM, and FMVTLPLMAAYGVGLGVLFVL.

This sequence belongs to the TatC family. Forms a complex with TatA.

It is found in the cell membrane. In terms of biological role, part of the twin-arginine translocation (Tat) system that transports large folded proteins containing a characteristic twin-arginine motif in their signal peptide across membranes. The polypeptide is Sec-independent protein translocase protein TatCt (Haloferax volcanii (strain ATCC 29605 / DSM 3757 / JCM 8879 / NBRC 14742 / NCIMB 2012 / VKM B-1768 / DS2) (Halobacterium volcanii)).